Consider the following 520-residue polypeptide: Amphoterin-induced protein 2 (520 aa).

The N-terminal stretch at 1-37 (MSLRFHTLPTLPRAVKPGCRELLCLLVIAVMVSPSSS) is a signal peptide. The LRRNT domain occupies 38–67 (GLCPTACICATDIVSCTNKNLSKVPGNLFR). Topologically, residues 38–398 (GLCPTACICA…SHHAHEAFNT (361 aa)) are extracellular. Disulfide bonds link C40/C46 and C44/C53. N-linked (GlcNAc...) asparagine glycosylation occurs at N57. LRR repeat units follow at residues 68–89 (LIKRLDLSYNRIGLLDADWIPV), 93–114 (KLSTLIVRHNNITSISTGSFST), 117–138 (NLKCLDLSSNRLKSVKSAMFQE), 141–162 (VLEVLLLYNNHISYLDPAAFGG), 165–186 (HLQKLYLSGNFLTKFPMDLYVG), and 192–213 (DLTFLDVSYNQIASIPMHHINL). N103 is a glycosylation site (N-linked (GlcNAc...) asparagine). Residues 227–283 (NPFVCDCSLYSLLTFWYRRHFNSVTDFKHDYTCRLWLDSRHSHQLLLLQDSFLNCSH) enclose the LRRCT domain. 2 cysteine pairs are disulfide-bonded: C231-C259 and C233-C281. N-linked (GlcNAc...) asparagine glycans are attached at residues N280, N287, N344, N372, N380, N383, and N387. Residues 288–378 (GSFHALGFIH…RLLNETVDIM (91 aa)) enclose the Ig-like C2-type domain. A disulfide bond links C309 and C362. Residues 399–419 (AFTTLAACVVSIVLVLLYLYL) traverse the membrane as a helical segment. The Cytoplasmic segment spans residues 420–520 (TPCPCKCRDK…FSDTPFVAST (101 aa)). 2 disordered regions span residues 437–458 (QSNAHSSILSPGPTRDASAEDR) and 498–520 (SRAKSDSDSVNSVFSDTPFVAST).

The protein belongs to the immunoglobulin superfamily. AMIGO family. In terms of assembly, binds itself as well as AMIGO1 and AMIGO3. In terms of tissue distribution, highest levels in the lung. High levels in cerebellar granule neurons and Purkinje cells. Also in pyramidal cells between CA1 and CA3 regions of the hippocampus and granule cells of the dentate gyrus.

It localises to the cell membrane. The protein localises to the nucleus. Required for depolarization-dependent survival of cultured cerebellar granule neurons. May mediate homophilic as well as heterophilic cell-cell interaction with AMIGO1 or AMIGO3. May contribute to signal transduction through its intracellular domain. This is Amphoterin-induced protein 2 from Rattus norvegicus (Rat).